The sequence spans 188 residues: MGGGWWWARAARLARLRFRRSLLPPQRPRSGGARGSFAPGHGPRAGASPPPVSELDRADAWLLRKAHETAFLSWFRNGLLASGIGVISFMQSDMGREAAYGFFLLGGLCVVWGSASYAVGLAALRGPMQLTLGGAAVGAGAVLAASLLWACAVGLYMGQLELDVELVPEDDGTASAEGPDEAGRPPPE.

The N-terminal 96 residues, 1–96, are a transit peptide targeting the mitochondrion; it reads MGGGWWWARA…ISFMQSDMGR (96 aa). The segment at 24–52 is disordered; sequence PPQRPRSGGARGSFAPGHGPRAGASPPPV. S48 carries the phosphoserine modification. The next 2 helical transmembrane spans lie at 102–122 and 135–155; these read FFLL…VGLA and AAVG…AVGL. The interval 168–188 is disordered; sequence PEDDGTASAEGPDEAGRPPPE.

This sequence belongs to the TMEM160 family.

The protein localises to the mitochondrion inner membrane. This chain is Transmembrane protein 160, found in Homo sapiens (Human).